Consider the following 363-residue polypeptide: MSSRPQVSVISVKGEQGSSQLPLPAVFAAPVRPDLVHSVFVRVNKNKRQAYAVAENAGHQTSAESWGTGRAVARIPRVGGGGTHRSGQAAFGNMCRGGRMFAPTKTWRRWNVKVNHNEKRYATASAIAASAVTSLVLARGHRVEQVKELPLVVSNEFESVTKTKDAVAVLKAVGAHKDVVKVIKSKKLRAGKGKLRGRRFTQRRGPLVVYAQDNGIVKALRNVPGVETASVKHLGLLQLAPGAHLGRFIIWTQGAFESLDSVYGSDSTKSIKSGYTLPSNIISNTDVTRLINSAEVQAVVRPAGEKTQKKSHVLKKNPLKNKQVLLRLNPYAKAYAAEKVGSAKVEQAKVKPSKGQFAEVLKN.

Belongs to the universal ribosomal protein uL4 family. Component of the large ribosomal subunit. Mature ribosomes consist of a small (40S) and a large (60S) subunit. The 40S subunit contains about 32 different proteins and 1 molecule of RNA (18S). The 60S subunit contains 45 different proteins and 3 molecules of RNA (25S, 5.8S and 5S).

Its subcellular location is the cytoplasm. Component of the ribosome, a large ribonucleoprotein complex responsible for the synthesis of proteins in the cell. The small ribosomal subunit (SSU) binds messenger RNAs (mRNAs) and translates the encoded message by selecting cognate aminoacyl-transfer RNA (tRNA) molecules. The large subunit (LSU) contains the ribosomal catalytic site termed the peptidyl transferase center (PTC), which catalyzes the formation of peptide bonds, thereby polymerizing the amino acids delivered by tRNAs into a polypeptide chain. The nascent polypeptides leave the ribosome through a tunnel in the LSU and interact with protein factors that function in enzymatic processing, targeting, and the membrane insertion of nascent chains at the exit of the ribosomal tunnel. This is Large ribosomal subunit protein uL4 from Candida albicans (strain SC5314 / ATCC MYA-2876) (Yeast).